Reading from the N-terminus, the 108-residue chain is Cell division protein FtsL (108 aa).

The Cytoplasmic segment spans residues M1 to R24. The chain crosses the membrane as a helical span at residues L25 to H45. Residues N46–R108 are Periplasmic-facing.

This sequence belongs to the FtsL family. In terms of assembly, part of a complex composed of FtsB, FtsL and FtsQ.

It localises to the cell inner membrane. Essential cell division protein. May link together the upstream cell division proteins, which are predominantly cytoplasmic, with the downstream cell division proteins, which are predominantly periplasmic. The chain is Cell division protein FtsL from Aliivibrio fischeri (strain ATCC 700601 / ES114) (Vibrio fischeri).